The following is a 165-amino-acid chain: Glycine cleavage system H protein, mitochondrial (165 aa).

The transit peptide at Met-1–Phe-34 directs the protein to the mitochondrion. The region spanning Val-56 to Lys-138 is the Lipoyl-binding domain. At Lys-97 the chain carries N6-lipoyllysine.

This sequence belongs to the GcvH family. The glycine cleavage system is composed of four proteins: P, T, L and H. (R)-lipoate serves as cofactor.

The protein resides in the mitochondrion. Its function is as follows. The glycine cleavage system catalyzes the degradation of glycine. The H protein shuttles the methylamine group of glycine from the P protein to the T protein. This chain is Glycine cleavage system H protein, mitochondrial (GDCSH), found in Pisum sativum (Garden pea).